The chain runs to 201 residues: Imidazoleglycerol-phosphate dehydratase (201 aa).

This sequence belongs to the imidazoleglycerol-phosphate dehydratase family.

It is found in the cytoplasm. It carries out the reaction D-erythro-1-(imidazol-4-yl)glycerol 3-phosphate = 3-(imidazol-4-yl)-2-oxopropyl phosphate + H2O. It functions in the pathway amino-acid biosynthesis; L-histidine biosynthesis; L-histidine from 5-phospho-alpha-D-ribose 1-diphosphate: step 6/9. The sequence is that of Imidazoleglycerol-phosphate dehydratase from Prochlorococcus marinus (strain MIT 9301).